A 488-amino-acid polypeptide reads, in one-letter code: Alpha-ketoglutaric semialdehyde dehydrogenase (488 aa).

Residues Lys180 and 233–238 (GSNQVG) each bind NAD(+). The Proton acceptor role is filled by Glu255. Catalysis depends on Cys289, which acts as the Nucleophile. The NAD(+) site is built by Gln336 and Glu390.

The protein belongs to the aldehyde dehydrogenase family. In terms of assembly, homotetramer.

It carries out the reaction 2,5-dioxopentanoate + NADP(+) + H2O = 2-oxoglutarate + NADPH + 2 H(+). It catalyses the reaction 2,5-dioxopentanoate + NAD(+) + H2O = 2-oxoglutarate + NADH + 2 H(+). In terms of biological role, catalyzes the NAD(P)(+)-dependent oxidation of alpha-ketoglutaric semialdehyde (alphaKGSA) to alpha-ketoglutarate. Prefers NADP(+) to NAD(+) as a cosubstrate. In vitro, can also use various aldehydes. This is Alpha-ketoglutaric semialdehyde dehydrogenase from Bacillus subtilis (strain 168).